Reading from the N-terminus, the 398-residue chain is Calreticulin (398 aa).

The N-terminal stretch at 1–19 (MKAVVLVVVSLLALSSINC) is a signal peptide. The tract at residues 20-197 (DVFFEEKFPD…NEKVESGDLE (178 aa)) is N-domain. Cys-105 and Cys-137 are disulfide-bonded. An alpha-D-glucoside is bound by residues Tyr-109, Lys-111, Tyr-128, and Asp-135. Repeat copies occupy residues 191-202 (VESGDLEADWDF), 210-221 (DPEAKKPEDWDD), 227-238 (DPEDKKPEDWDK), 244-255 (DPDATKPEDWDD), 259-269 (GEWEPPMIDNP), 273-283 (GVWAPKQIDNP), and 287-297 (GPWVHPEIDNP). The segment at 191–255 (VESGDLEADW…DATKPEDWDD (65 aa)) is 4 X approximate repeats. Residues 198-308 (ADWDFLPNKK…YTPDSNLYKR (111 aa)) form a P-domain region. Residues 207-251 (KIKDPEAKKPEDWDDKPTIPDPEDKKPEDWDKPEHIPDPDATKPE) are compositionally biased toward basic and acidic residues. The disordered stretch occupies residues 207–257 (KIKDPEAKKPEDWDDKPTIPDPEDKKPEDWDKPEHIPDPDATKPEDWDDEM). The interval 259–297 (GEWEPPMIDNPDYKGVWAPKQIDNPAYKGPWVHPEIDNP) is 3 X approximate repeats. Residues 309–398 (DEICAVGLDL…AAPVEEHDEL (90 aa)) are C-domain. Asp-317 contacts an alpha-D-glucoside. A disordered region spans residues 334–398 (DDPAAAKERG…AAPVEEHDEL (65 aa)). Residues 337-372 (AAAKERGEVIKKRQEGEKKMKSEQDEAEREKEKAEK) are compositionally biased toward basic and acidic residues. Acidic residues predominate over residues 373 to 387 (PDDEEDDEDLDDETG). Positions 395 to 398 (HDEL) match the Prevents secretion from ER motif.

It belongs to the calreticulin family. Monomer. Expressed in fat bodies. Not expressed in midgut, silk gland, ovary or testis.

It localises to the endoplasmic reticulum lumen. In terms of biological role, molecular calcium-binding chaperone promoting folding, oligomeric assembly and quality control in the ER via the calreticulin/calnexin cycle. This lectin may interact transiently with almost all of the monoglucosylated glycoproteins that are synthesized in the ER. The protein is Calreticulin of Bombyx mori (Silk moth).